Here is a 490-residue protein sequence, read N- to C-terminus: Cytochrome P450 2C29 (490 aa).

The signal sequence occupies residues 1-25 (MDLVVFLALTLSCLILLSLWRQSSG). An N6-acetyllysine mark is found at K249, K252, and K375. C435 lines the heme pocket.

Belongs to the cytochrome P450 family. Requires heme as cofactor. Expressed in liver as well as in extrahepatic tissues including brain, kidney, lung, heart, and intestine.

The protein localises to the endoplasmic reticulum membrane. It localises to the microsome membrane. It carries out the reaction an organic molecule + reduced [NADPH--hemoprotein reductase] + O2 = an alcohol + oxidized [NADPH--hemoprotein reductase] + H2O + H(+). It catalyses the reaction (5Z,8Z,11Z,14Z)-eicosatetraenoate + reduced [NADPH--hemoprotein reductase] + O2 = 14,15-epoxy-(5Z,8Z,11Z)-eicosatrienoate + oxidized [NADPH--hemoprotein reductase] + H2O + H(+). It participates in lipid metabolism; arachidonate metabolism. In terms of biological role, a cytochrome P450 monooxygenase that selectively catalyzes the epoxidation of 14,15 double bond of (5Z,8Z,11Z,14Z)-eicosatetraenoic acid (arachidonate) forming 14,15-epoxyeicosatrienoic acid (14,15-EET) regioisomer. Mechanistically, uses molecular oxygen inserting one oxygen atom into a substrate, and reducing the second into a water molecule, with two electrons provided by NADPH via cytochrome P450 reductase (CPR; NADPH--hemoprotein reductase). The polypeptide is Cytochrome P450 2C29 (Mus musculus (Mouse)).